The primary structure comprises 1127 residues: Ras guanine nucleotide exchange factor F (1127 aa).

Disordered stretches follow at residues 1 to 82 (MTDK…SLLN) and 96 to 154 (NSGG…SSSS). Composition is skewed to low complexity over residues 23–53 (NQPS…TTSP) and 67–82 (NNNN…SLLN). Residues 122 to 132 (RTSTTLAQFSG) are compositionally biased toward polar residues. Over residues 133 to 154 (SSLPNTENSSPPPSSSLISSSS) the composition is skewed to low complexity. Kelch repeat units follow at residues 212–261 (GFYL…LYNN), 262–311 (SMYI…VESG), 313–366 (MIVF…MHKG), 367–418 (NMYV…LFQD), and 420–469 (IFIS…VKGN). A LisH domain is found at 557 to 589 (SHQFVLQLIMEYLERNTYHKVIAAIQKESGVLH). In terms of domain architecture, N-terminal Ras-GEF spans 673–804 (NKVQIKAATF…KLRELKKKLQ (132 aa)). The 228-residue stretch at 835 to 1062 (DELEIARQMT…YDLNLLSESL (228 aa)) folds into the Ras-GEF domain. Residues 1090–1127 (LGSARELNNSNRDSNNITGSSSNNNSNSSNSLSPIVKL) form a disordered region. Positions 1103–1127 (SNNITGSSSNNNSNSSNSLSPIVKL) are enriched in low complexity.

In terms of biological role, promotes the exchange of Ras-bound GDP by GTP. This chain is Ras guanine nucleotide exchange factor F (gefF), found in Dictyostelium discoideum (Social amoeba).